The following is a 324-amino-acid chain: tRNA pseudouridine synthase B (324 aa).

The Nucleophile role is filled by Asp-49.

The protein belongs to the pseudouridine synthase TruB family. Type 1 subfamily.

The catalysed reaction is uridine(55) in tRNA = pseudouridine(55) in tRNA. Functionally, responsible for synthesis of pseudouridine from uracil-55 in the psi GC loop of transfer RNAs. This Tolumonas auensis (strain DSM 9187 / NBRC 110442 / TA 4) protein is tRNA pseudouridine synthase B.